A 526-amino-acid chain; its full sequence is Plant intracellular Ras-group-related LRR protein 5 (526 aa).

LRR repeat units lie at residues 229–252 (LSSLVRLDLSENCIMVLPATIGGL), 253–275 (ISLTRLDLHSNRIGQLPESIGDL), 276–297 (LNLVNLNLSGNQLSSLPSSFNR), 298–321 (LIHLEELDLSSNSLSILPESIGSL), 323–344 (SLKKLDVETNNIEEIPHSISGC), 346–367 (SMEELRADYNRLKALPEAVGKL), 368–390 (STLEILTVRYNNIRQLPTTMSSM), 391–414 (ANLKELDVSFNELESVPESLCYAK), 416–437 (LVKLNIGNNFANLRSLPGLIGN), 438–463 (LEKLEELDMSNNQIRFLPYSFKTLSN), and 465–484 (RVLQTEQNPLEELPRDITEK). The GVYW; degenerate signature appears at 485–492 (GAQAVVQY).

The protein belongs to the SHOC2 family. Widely expressed but preferentially in roots.

In terms of biological role, leucine-rich repeat protein that likely mediates protein interactions, possibly in the context of signal transduction. This is Plant intracellular Ras-group-related LRR protein 5 (PIRL5) from Arabidopsis thaliana (Mouse-ear cress).